The following is a 556-amino-acid chain: 2-methylpropanoate--CoA ligase CCL4 (556 aa).

Residues 192-200, 325-330, Asp-423, 435-438, and Lys-531 contribute to the ATP site; these read TSGTTSSPK, HGYGLT, and IKDR. The SBD1 stretch occupies residues 260 to 325; the sequence is DSEIIYDMIK…TESLGFAVSH (66 aa). Positions 326–402 are SBD2; the sequence is GYGLTETAGL…LRGGSVMLGY (77 aa).

Belongs to the ATP-dependent AMP-binding enzyme family. Mostly expressed in old leaves and in cones and glandular trichomes (lupulin glands) after flowering, and, to a lower extent, in stems, young leaves and flowers.

Its subcellular location is the cytoplasm. The protein localises to the cytosol. It catalyses the reaction 2-methylpropanoate + ATP + CoA = 2-methylpropanoyl-CoA + AMP + diphosphate. The catalysed reaction is propanoate + ATP + CoA = propanoyl-CoA + AMP + diphosphate. The enzyme catalyses butanoate + ATP + CoA = butanoyl-CoA + AMP + diphosphate. It carries out the reaction 2-methylbutanoate + ATP + CoA = 2-methylbutanoyl-CoA + AMP + diphosphate. The protein operates within secondary metabolite biosynthesis. Its function is as follows. Involved in the biosynthesis of prenylated phenolics natural products which contribute to the bitter taste of beer and display broad biological activities. Catalyzes the ligation of CoA on 2-methylpropanoate (isobutyric acid) and 2-methylbutanoate to produce 2-methylpropanoyl-CoA and 2-methylbutanoyl-CoA, respectively. Can also use propanoate and butanoate as substrates with a lower efficiency. In Humulus lupulus (European hop), this protein is 2-methylpropanoate--CoA ligase CCL4.